The chain runs to 145 residues: Large ribosomal subunit protein uL11 (145 aa).

Belongs to the universal ribosomal protein uL11 family. Part of the ribosomal stalk of the 50S ribosomal subunit. Interacts with L10 and the large rRNA to form the base of the stalk. L10 forms an elongated spine to which L12 dimers bind in a sequential fashion forming a multimeric L10(L12)X complex. One or more lysine residues are methylated.

Its function is as follows. Forms part of the ribosomal stalk which helps the ribosome interact with GTP-bound translation factors. This is Large ribosomal subunit protein uL11 from Rickettsia peacockii (strain Rustic).